We begin with the raw amino-acid sequence, 192 residues long: Glycerol-3-phosphate acyltransferase (192 aa).

5 helical membrane passes run 4-24 (FAII…DVVI), 48-68 (LVLV…WVGY), 74-94 (YFEL…PIFF), 101-121 (GVAT…GSML), and 125-145 (LLIF…ALIL).

This sequence belongs to the PlsY family. Probably interacts with PlsX.

Its subcellular location is the cell inner membrane. It catalyses the reaction an acyl phosphate + sn-glycerol 3-phosphate = a 1-acyl-sn-glycero-3-phosphate + phosphate. It functions in the pathway lipid metabolism; phospholipid metabolism. Its function is as follows. Catalyzes the transfer of an acyl group from acyl-phosphate (acyl-PO(4)) to glycerol-3-phosphate (G3P) to form lysophosphatidic acid (LPA). This enzyme utilizes acyl-phosphate as fatty acyl donor, but not acyl-CoA or acyl-ACP. This chain is Glycerol-3-phosphate acyltransferase, found in Histophilus somni (strain 129Pt) (Haemophilus somnus).